A 327-amino-acid polypeptide reads, in one-letter code: Inactive peptidyl-prolyl cis-trans isomerase FKBP6 (327 aa).

The 90-residue stretch at 54-143 (DASVLVKYSG…LFEIELLDFL (90 aa)) folds into the PPIase FKBP-type domain. TPR repeat units follow at residues 171–204 (AATE…LRRR), 219–252 (LPVL…DQKN), and 253–286 (AKAL…QPFN).

This sequence belongs to the FKBP6 family. In terms of assembly, interacts (via TPR repeats) with HSP90. Interacts with HSP72/HSPA2 and CLTC. Interacts with GAPDH; leading to inhibit GAPDH catalytic activity. Detected in all tissues examined, with higher expression in testis, heart, skeletal muscle, liver, and kidney.

The protein resides in the cytoplasm. The protein localises to the nucleus. In terms of biological role, has an essential role in spermatogenesis. It is required to repress transposable elements and prevent their mobilization, which is essential for the germline integrity. Acts via the piRNA metabolic process, which mediates the repression of transposable elements during meiosis by forming complexes composed of piRNAs and Piwi proteins and govern the methylation and subsequent repression of transposons. Acts as a co-chaperone via its interaction with HSP90 and is required for the piRNA amplification process, the secondary piRNA biogenesis. May be required together with HSP90 in removal of 16 nucleotide ping-pong by-products from Piwi complexes, possibly facilitating turnover of Piwi complexes. The sequence is that of Inactive peptidyl-prolyl cis-trans isomerase FKBP6 (FKBP6) from Homo sapiens (Human).